A 737-amino-acid chain; its full sequence is Glycogen [starch] synthase, muscle (737 aa).

Serine 8 carries the phosphoserine; by AMPK and PKA modification. Serine 11 is subject to Phosphoserine. Lysine 39 contacts UDP. 2 residues coordinate UDP-alpha-D-glucose: histidine 205 and arginine 211. Alpha-D-glucose 6-phosphate-binding residues include histidine 291, glutamate 292, glutamine 294, histidine 297, and lysine 301. A UDP-binding site is contributed by arginine 331. Arginine 331 lines the UDP-alpha-D-glucose pocket. Residue serine 412 is modified to Phosphoserine. Histidine 501 lines the alpha-D-glucose 6-phosphate pocket. Positions 510, 512, and 513 each coordinate UDP-alpha-D-glucose. Threonine 515 is a UDP binding site. Arginine 582 and arginine 586 together coordinate alpha-D-glucose 6-phosphate. The interval 634-737 is disordered; the sequence is YRYPRPASVP…PTSSLGEERN (104 aa). Phosphoserine; by DYRK2, GSK3-alpha, GSK3-beta and PASK is present on serine 641. Phosphoserine; by GSK3-alpha and GSK3-beta occurs at positions 645 and 649. Serine 652 is subject to Phosphoserine. Serine 653 is subject to Phosphoserine; by GSK3-alpha and GSK3-beta. The residue at position 657 (serine 657) is a Phosphoserine; by CK2. A compositionally biased stretch (acidic residues) spans 658–681; the sequence is EDEEDPRNGPLEEDGERYDEDEEA. The segment covering 682-695 has biased composition (basic and acidic residues); it reads AKDRRNIRAPEWPR. Serine 698 carries the post-translational modification Phosphoserine. Positions 698-714 are enriched in polar residues; that stretch reads SCTSSTSGSKRNSVDTA. Threonine 700 carries the phosphothreonine modification. Phosphoserine is present on serine 710. Low complexity predominate over residues 715 to 737; that stretch reads TSSSLSTPSEPLSPTSSLGEERN. At threonine 721 the chain carries Phosphothreonine. Serine 727 and serine 731 each carry phosphoserine.

Belongs to the glycosyltransferase 3 family. As to quaternary structure, part of the GYS1-GYG1 complex, a heterooctamer composed of a tetramer of GYS1 and 2 dimers of GYG1, where each GYS1 protomer binds to one GYG1 subunit (via GYG1 C-terminus); the GYS1 tetramer may dissociate from GYG1 dimers to continue glycogen polymerization on its own. Post-translationally, phosphorylation at Ser-8 by AMPK inactivates the enzyme activity. Primed phosphorylation at Ser-657 (site 5) by CSNK2A1 and CSNK2A2 is required for inhibitory phosphorylation at Ser-641 (site 3a), Ser-645 (site 3b), Ser-649 (site 3c) and Ser-653 (site 4) by GSK3A an GSK3B. Phosphorylated at Ser-641 by PASK, leading to inactivation; phosphorylation by PASK is inhibited by glycogen. Phosphorylated at Ser-641 by DYRK2, leading to inactivation. Dephosphorylation at Ser-641 and Ser-645 by PP1 activates the enzyme.

It catalyses the reaction [(1-&gt;4)-alpha-D-glucosyl](n) + UDP-alpha-D-glucose = [(1-&gt;4)-alpha-D-glucosyl](n+1) + UDP + H(+). It functions in the pathway glycan biosynthesis; glycogen biosynthesis. With respect to regulation, allosteric activation by glucose-6-phosphate. Phosphorylation reduces the activity towards UDP-glucose. When in the non-phosphorylated state, glycogen synthase does not require glucose-6-phosphate as an allosteric activator; when phosphorylated it does. Its function is as follows. Glycogen synthase participates in the glycogen biosynthetic process along with glycogenin and glycogen branching enzyme. Extends the primer composed of a few glucose units formed by glycogenin by adding new glucose units to it. In this context, glycogen synthase transfers the glycosyl residue from UDP-Glc to the non-reducing end of alpha-1,4-glucan. In Pongo abelii (Sumatran orangutan), this protein is Glycogen [starch] synthase, muscle (GYS1).